The sequence spans 128 residues: 3-aminoacrylate deaminase RutC (128 aa).

Belongs to the RutC family.

The catalysed reaction is (Z)-3-aminoacrylate + H2O + H(+) = 3-oxopropanoate + NH4(+). Involved in pyrimidine catabolism. Catalyzes the deamination of 3-aminoacrylate to malonic semialdehyde, a reaction that can also occur spontaneously. RutC may facilitate the reaction and modulate the metabolic fitness, rather than catalyzing essential functions. This Enterobacter cloacae subsp. cloacae (strain ATCC 13047 / DSM 30054 / NBRC 13535 / NCTC 10005 / WDCM 00083 / NCDC 279-56) protein is 3-aminoacrylate deaminase RutC.